A 531-amino-acid chain; its full sequence is Beta-hexosaminidase subunit beta (531 aa).

Residues 1-24 (MRHRGLGLAALLALLAAVAPRSSA) form the signal peptide. A glycan (N-linked (GlcNAc...) asparagine) is linked at N50. The cysteines at positions 65 and 111 are disulfide-linked. N116, N164, and N301 each carry an N-linked (GlcNAc...) asparagine glycan. Disulfide bonds link C283-C334 and C508-C525. The Proton donor role is filled by E329.

It belongs to the glycosyl hydrolase 20 family. As to quaternary structure, there are 3 forms of beta-hexosaminidase: hexosaminidase A is a heterodimer composed of one subunit alpha and one subunit beta (chain A and B); hexosaminidase B is a homodimer of two beta subunits (two chains A and B); hexosaminidase S is a homodimer of two alpha subunits. The composition of the dimer (isozyme A versus isozyme S) has a significant effect on the substrate specificity of the alpha subunit active site.

It localises to the lysosome. The protein resides in the cytoplasmic vesicle. Its subcellular location is the secretory vesicle. It is found in the cortical granule. It carries out the reaction Hydrolysis of terminal non-reducing N-acetyl-D-hexosamine residues in N-acetyl-beta-D-hexosaminides.. The enzyme catalyses N-acetyl-beta-D-galactosaminyl-(1-&gt;4)-beta-D-3-sulfogalactosyl-(1-&gt;4)-beta-D-glucosyl-(1&lt;-&gt;1')-ceramide + H2O = a beta-D-3-sulfogalactosyl-(1-&gt;4)-beta-D-glucosyl-(1&lt;-&gt;1')-ceramide + N-acetyl-beta-D-galactosamine. The catalysed reaction is a ganglioside GM2 (d18:1(4E)) + H2O = a ganglioside GM3 (d18:1(4E)) + N-acetyl-beta-D-galactosamine. It catalyses the reaction a ganglioside GM2 + H2O = a ganglioside GM3 + N-acetyl-beta-D-galactosamine. It carries out the reaction beta-D-GalNAc-(1-&gt;4)-alpha-L-IdoA-(1-&gt;3)-beta-D-GalNAc-4-sulfate-(1-&gt;4)-alpha-L-IdoA-(1-&gt;3)-D-GalNAc-4-sulfate + H2O = alpha-L-IdoA-(1-&gt;3)-beta-D-GalNAc-4-sulfate-(1-&gt;4)-alpha-L-IdoA-(1-&gt;3)-D-GalNAc-4-sulfate + N-acetyl-D-galactosamine. The enzyme catalyses N-acetyl-beta-D-6-sulfogalactosaminyl-(1-&gt;4)-alpha-L-iduronyl-(1-&gt;3)-N-acetyl-D-6-sulfogalactosamine + H2O = alpha-L-iduronyl-(1-&gt;3)-N-acetyl-D-6-sulfogalactosamine + N-acetyl-D-6-sulfogalactosamine. Its activity is regulated as follows. Addition of GM2A stimulates the hydrolysis of sulfated glycosphingolipid SM2 and the ganglioside GM2. In terms of biological role, hydrolyzes the non-reducing end N-acetyl-D-hexosamine and/or sulfated N-acetyl-D-hexosamine of glycoconjugates, such as the oligosaccharide moieties from proteins and neutral glycolipids, or from certain mucopolysaccharides. The isozyme B does not hydrolyze each of these substrates, however hydrolyzes efficiently neutral oligosaccharide. Only the isozyme A is responsible for the degradation of GM2 gangliosides in the presence of GM2A. During fertilization is responsible, at least in part, for the zona block to polyspermy. Present in the cortical granules of non-activated oocytes, is exocytosed during the cortical reaction in response to oocyte activation and inactivates the sperm galactosyltransferase-binding site, accounting for the block in sperm binding to the zona pellucida. The chain is Beta-hexosaminidase subunit beta from Felis catus (Cat).